A 194-amino-acid chain; its full sequence is Naphthalene 1,2-dioxygenase system, small oxygenase component (194 aa).

This sequence belongs to the bacterial ring-hydroxylating dioxygenase beta subunit family. As to quaternary structure, the naphthalene dioxygenase (NDO) multicomponent enzyme system is composed of an electron transfer component and a dioxygenase component (iron sulfur protein (ISP)). The electron transfer component is composed of a ferredoxin reductase (NdoR) and a ferredoxin (NdoA), and the dioxygenase component is formed of a heterohexamer (trimer of heterodimers) of three large alpha subunits (NdoB) and three small beta subunits (NdoC).

It participates in aromatic compound metabolism; naphthalene degradation. Component of the naphthalene dioxygenase (NDO) multicomponent enzyme system which catalyzes the incorporation of both atoms of molecular oxygen into naphthalene to form cis-(1R,2S)-dihydroxy-1,2-dihydronaphthalene. The beta subunit seems to have a structural role in the holoenzyme. Also able to catalyze the cis-dihydroxylation of biphenyl and phenanthrene. The sequence is that of Naphthalene 1,2-dioxygenase system, small oxygenase component from Pseudomonas putida (Arthrobacter siderocapsulatus).